Consider the following 54-residue polypeptide: Chymosin (54 aa).

The propeptide at 1-27 (SEITRVPLHKGKSLRKALKEHGLLEBF) is activation peptide.

Belongs to the peptidase A1 family. In terms of assembly, monomer.

The enzyme catalyses Broad specificity similar to that of pepsin A. Clots milk by cleavage of a single 104-Ser-Phe-|-Met-Ala-107 bond in kappa-chain of casein.. In terms of biological role, chymosin is synthesized in the mucosa of the stomach. The enzyme hydrolyzes casein to paracasein. The protein is Chymosin (CYM) of Felis catus (Cat).